Reading from the N-terminus, the 212-residue chain is Putative tyrosine-protein phosphatase OCA1 (212 aa).

Positions 1–27 (MSNKDTSILKGNVDHEEADSNPKLRKI) are disordered. The segment covering 12-22 (NVDHEEADSNP) has biased composition (basic and acidic residues). The Tyrosine-protein phosphatase domain maps to 40 to 208 (NFCPVERQLY…SVEIDPSKVP (169 aa)). The active-site Phosphocysteine intermediate is the C146.

It belongs to the protein-tyrosine phosphatase family.

The protein resides in the cytoplasm. The enzyme catalyses O-phospho-L-tyrosyl-[protein] + H2O = L-tyrosyl-[protein] + phosphate. In terms of biological role, putative tyrosine-protein phosphatase required for protection against superoxide stress. In Scheffersomyces stipitis (strain ATCC 58785 / CBS 6054 / NBRC 10063 / NRRL Y-11545) (Yeast), this protein is Putative tyrosine-protein phosphatase OCA1 (OCA1).